Reading from the N-terminus, the 190-residue chain is Cysteine dioxygenase (190 aa).

Fe cation-binding residues include H78, H80, and H132. Positions 85 to 149 (CFVKILDGEL…SNGAVSLHLY (65 aa)) form a cross-link, 3'-(S-cysteinyl)-tyrosine (Cys-Tyr).

It belongs to the cysteine dioxygenase family. Fe cation is required as a cofactor. The thioether cross-link between Cys-85 and Tyr-149 plays a structural role through stabilizing the Fe(2+) ion, and prevents the production of highly damaging free hydroxyl radicals by holding the oxygen radical via hydroxyl hydrogen.

The catalysed reaction is L-cysteine + O2 = 3-sulfino-L-alanine + H(+). The protein operates within organosulfur biosynthesis; taurine biosynthesis; hypotaurine from L-cysteine: step 1/2. This Caenorhabditis briggsae protein is Cysteine dioxygenase (cdo-1).